The following is a 135-amino-acid chain: uncharacterized protein (135 aa).

Residues 1-80 (MRSSSLPGAR…QRGSCASANA (80 aa)) are disordered. Over residues 54–65 (GARGGGRRGWGG) the composition is skewed to gly residues.

This is an uncharacterized protein from Homo sapiens (Human).